We begin with the raw amino-acid sequence, 308 residues long: tRNA pseudouridine synthase B (308 aa).

D51 (nucleophile) is an active-site residue.

Belongs to the pseudouridine synthase TruB family. Type 1 subfamily.

It carries out the reaction uridine(55) in tRNA = pseudouridine(55) in tRNA. Its function is as follows. Responsible for synthesis of pseudouridine from uracil-55 in the psi GC loop of transfer RNAs. The chain is tRNA pseudouridine synthase B from Aromatoleum aromaticum (strain DSM 19018 / LMG 30748 / EbN1) (Azoarcus sp. (strain EbN1)).